Consider the following 172-residue polypeptide: Large ribosomal subunit protein uL10 (172 aa).

Belongs to the universal ribosomal protein uL10 family. As to quaternary structure, part of the ribosomal stalk of the 50S ribosomal subunit. The N-terminus interacts with L11 and the large rRNA to form the base of the stalk. The C-terminus forms an elongated spine to which L12 dimers bind in a sequential fashion forming a multimeric L10(L12)X complex.

Forms part of the ribosomal stalk, playing a central role in the interaction of the ribosome with GTP-bound translation factors. The chain is Large ribosomal subunit protein uL10 from Beijerinckia indica subsp. indica (strain ATCC 9039 / DSM 1715 / NCIMB 8712).